A 96-amino-acid chain; its full sequence is YcgL domain-containing protein VS_0884 (96 aa).

The 84-residue stretch at 1–84 folds into the YcgL domain; that stretch reads MLCSIYKSSK…PPVNELELHK (84 aa).

In Vibrio atlanticus (strain LGP32) (Vibrio splendidus (strain Mel32)), this protein is YcgL domain-containing protein VS_0884.